The sequence spans 400 residues: Elongation factor Tu-B (400 aa).

The 200-residue stretch at lysine 10–glutamate 209 folds into the tr-type G domain. The tract at residues glycine 19–threonine 26 is G1. Glycine 19 to threonine 26 lines the GTP pocket. Threonine 26 provides a ligand contact to Mg(2+). The interval glycine 60 to asparagine 64 is G2. Residues aspartate 81–glycine 84 are G3. Residues aspartate 81–histidine 85 and asparagine 136–aspartate 139 contribute to the GTP site. Positions asparagine 136 to aspartate 139 are G4. Residues serine 174–leucine 176 form a G5 region.

Belongs to the TRAFAC class translation factor GTPase superfamily. Classic translation factor GTPase family. EF-Tu/EF-1A subfamily. Monomer.

Its subcellular location is the cytoplasm. The enzyme catalyses GTP + H2O = GDP + phosphate + H(+). GTP hydrolase that promotes the GTP-dependent binding of aminoacyl-tRNA to the A-site of ribosomes during protein biosynthesis. This Caldanaerobacter subterraneus subsp. tengcongensis (strain DSM 15242 / JCM 11007 / NBRC 100824 / MB4) (Thermoanaerobacter tengcongensis) protein is Elongation factor Tu-B.